The sequence spans 136 residues: Group 1 truncated hemoglobin GlbN (136 aa).

H81 is a binding site for heme.

Belongs to the truncated hemoglobin family. Group I subfamily. Homodimer. It depends on heme as a cofactor.

Functionally, binds oxygen cooperatively with very high affinity because of a fast combination and a slow dissociation rate. This Mycolicibacterium paratuberculosis (strain ATCC BAA-968 / K-10) (Mycobacterium paratuberculosis) protein is Group 1 truncated hemoglobin GlbN (glbN).